The primary structure comprises 523 residues: Cytochrome b5 reductase 4 (523 aa).

Positions leucine 54 to alanine 130 constitute a Cytochrome b5 heme-binding domain. Positions 89 and 112 each coordinate heme. A CS domain is found at glutamate 167–glycine 258. Residues leucine 275–phenylalanine 387 form the FAD-binding FR-type domain. Residues glutamate 367–glycine 382 and aspartate 394–leucine 426 contribute to the FAD site.

It belongs to the flavoprotein pyridine nucleotide cytochrome reductase family. FAD is required as a cofactor.

Its subcellular location is the endoplasmic reticulum. The catalysed reaction is 2 Fe(III)-[cytochrome b5] + NADH = 2 Fe(II)-[cytochrome b5] + NAD(+) + H(+). Its function is as follows. NADH-cytochrome b5 reductase involved in endoplasmic reticulum stress response pathway. In Xenopus tropicalis (Western clawed frog), this protein is Cytochrome b5 reductase 4 (cyb5r4).